We begin with the raw amino-acid sequence, 525 residues long: Cyclic AMP-responsive element-binding protein 3-like protein 2 (525 aa).

The Cytoplasmic portion of the chain corresponds to 1–382; sequence MEIMESGDPV…SCKAAGTQTG (382 aa). 3 disordered regions span residues 85 to 104, 203 to 267, and 309 to 338; these read LCGD…DDNF, EALQ…QGSG, and NKIS…SSEN. Composition is skewed to polar residues over residues 90–102 and 213–239; these read RPQS…SSDD and SSHG…QSQA. The bZIP domain maps to 299–362; it reads ALKKIRRKIK…RTLLQQLQRL (64 aa). Residues 301–330 are basic motif; that stretch reads KKIRRKIKNKISAQESRRKKKEYMDSLEKR. Over residues 322–332 the composition is skewed to basic and acidic residues; sequence EYMDSLEKRVE. A leucine-zipper region spans residues 341-362; the sequence is LRKKVEVLESTNRTLLQQLQRL. A helical; Signal-anchor for type II membrane protein membrane pass occupies residues 383–403; the sequence is TCLMMVVLCFAVIFGSFTQNL. The Lumenal portion of the chain corresponds to 404 to 525; it reads DMYSSSSKTI…ELDRTVNTTS (122 aa). The S1P recognition motif lies at 433–436; sequence RKLL. N-linked (GlcNAc...) asparagine glycans are attached at residues asparagine 490, asparagine 509, and asparagine 522.

It belongs to the bZIP family. ATF subfamily. Binds DNA as a dimer. Post-translationally, upon ER stress, translocated to the Golgi apparatus, where it is processed by regulated intramembrane proteolysis (RIP) to release the cytosol-facing N-terminal transcription factor domain. The cleavage is performed sequentially by site-1 and site-2 proteases (S1P/mbtps1 and S2P/mbtps2).

It is found in the endoplasmic reticulum membrane. The protein resides in the nucleus. Transcription factor involved in unfolded protein response (UPR). In the absence of endoplasmic reticulum (ER) stress, inserted into ER membranes, with N-terminal DNA-binding and transcription activation domains oriented toward the cytosolic face of the membrane. In response to ER stress, transported to the Golgi, where it is cleaved in a site-specific manner by resident proteases S1P/mbtps1 and S2P/mbtps2. The released N-terminal cytosolic domain is translocated to the nucleus to effect transcription of specific target genes. Plays a critical role in chondrogenesis. May protect neuroblastoma cells from ER stress-induced death. In vitro activates transcription of target genes via direct binding to the CRE site. The protein is Cyclic AMP-responsive element-binding protein 3-like protein 2 (creb3l2) of Xenopus laevis (African clawed frog).